Consider the following 24-residue polypeptide: Grammistin Pp 4b (24 aa).

Exists as aggregates of 3-4 molecules. In terms of tissue distribution, expressed by the skin glands.

It is found in the secreted. Its function is as follows. Thanks to its abundant amphiphilic alpha-helices, it may integrate into membrane phospholipids, leading to lysis of the membrane. Its hemolytic activity is inhibited by phospholipids, but not by cholesterol. Has antibacterial activity with a broad spectrum against various species of bacteria including both Gram-positive and Gram-negative groups. Also has ichthyotoxic activity. The polypeptide is Grammistin Pp 4b (Pogonoperca punctata (Clown grouper)).